Consider the following 1364-residue polypeptide: ABC-type transporter cns4 (1364 aa).

Residues 42-290 (SRVKESRAKP…MEEMGFLYTD (249 aa)) form the ABC transporter 1 domain. Asn-152 and Asn-214 each carry an N-linked (GlcNAc...) asparagine glycan. 5 helical membrane passes run 435 to 455 (LFFAVLLNALLSMSEVTGSFA), 483 to 503 (IPLIAMQVTLFALPVYWMTGL), 508 to 528 (EAFLTYWIITISVTMCMTALF), 540 to 560 (AAIKVTGFLMSALIMYTGFLI), and 567 to 587 (PWLGWIFWINPLAYGYEAVLS). Residue Asn-610 is glycosylated (N-linked (GlcNAc...) asparagine). A helical membrane pass occupies residues 650 to 670 (FAIVWVWWALFVILTVYFTSN). Asn-689, Asn-711, and Asn-739 each carry an N-linked (GlcNAc...) asparagine glycan. The interval 697–732 (DEEVGSGPDSHDSRNRSGISPIGDKQETSTDGPSKI) is disordered. The 249-residue stretch at 737-985 (IRNTSVFTWK…TVNEYFGRNG (249 aa)) folds into the ABC transporter 2 domain. 779–786 (GSSGAGKT) serves as a coordination point for ATP. 6 consecutive transmembrane segments (helical) span residues 1076 to 1094 (LMLHITSGLLNGFSFWKIG), 1105 to 1125 (FTIFNFIFVAPGVIAQLQPLF), 1146 to 1166 (AFATGLIVSELPYLVVCAVVY), 1185 to 1205 (AVFFVVLMYEFIYTGIGQAIA), 1211 to 1231 (AIFAVLINPLIIAILVFFCGV), and 1245 to 1265 (WLYYLDPFNYLMGSLLIFTTF).

This sequence belongs to the ABC transporter superfamily. ABCG family. PDR (TC 3.A.1.205) subfamily.

Its subcellular location is the cell membrane. ABC-type transporter; part of the gene cluster that mediates the biosynthesis of cordycepin (COR) and pentostatin (PTN), two adenosine analogs with related bioactivity profiles as both mimic adenosine and can inhibit some of the processes that are adenosine dependent. Mediates the pumping of pentostatin but not of cordycepin out of fungal cells. Decreasing intracellular pentostatin releases adenosine deaminase (ADA) inhibition, allowing ADA to deaminate cordycepin into non-toxic 3'-d. This Cordyceps militaris (strain CM01) (Caterpillar fungus) protein is ABC-type transporter cns4.